A 160-amino-acid chain; its full sequence is Transcription elongation factor GreB (160 aa).

This sequence belongs to the GreA/GreB family. GreB subfamily.

Necessary for efficient RNA polymerase transcription elongation past template-encoded arresting sites. The arresting sites in DNA have the property of trapping a certain fraction of elongating RNA polymerases that pass through, resulting in locked ternary complexes. Cleavage of the nascent transcript by cleavage factors such as GreA or GreB allows the resumption of elongation from the new 3'terminus. GreB releases sequences of up to 9 nucleotides in length. This is Transcription elongation factor GreB from Vibrio vulnificus (strain CMCP6).